The chain runs to 142 residues: Large ribosomal subunit protein uL11 (142 aa).

Belongs to the universal ribosomal protein uL11 family. As to quaternary structure, part of the ribosomal stalk of the 50S ribosomal subunit. Interacts with L10 and the large rRNA to form the base of the stalk. L10 forms an elongated spine to which L12 dimers bind in a sequential fashion forming a multimeric L10(L12)X complex. In terms of processing, one or more lysine residues are methylated.

Functionally, forms part of the ribosomal stalk which helps the ribosome interact with GTP-bound translation factors. The protein is Large ribosomal subunit protein uL11 of Nitrobacter hamburgensis (strain DSM 10229 / NCIMB 13809 / X14).